The chain runs to 455 residues: MRLLVVGKLNGQLSVAVKMAMNAGAKVSHVETTEQATNALRAGQGADLLMVDYVLDIAGLIAANEAERMRVPVVACGVDADPMRAANAIKAGAKEFIPLPPDAELIAAVLAAVTDDEKPMVVRDPAMEQVIKLADQVAPSEASILITGESGSGKEVMARYVHGKSRRAKAPFISVNCAAIPENLLESELFGHEKGAFTGAMARRIGKFEEADGGTLLLDEISEMDVRLQAKLLRAIQEREIDRVGGSKPVKVNIRILATSNRDLAQAVKDGTFREDLLYRLNVVNLRLPPLRERPADVISLCEFFVKKYSAANGIEEKPISAEAKRRLIAHRWPGNVRELENAMHRAVLLSAGPEIEEFAIRLPDGQPMAPAPDVAVARGAQMAADAASRAFVGSTVAEVEQQLIIDTLEHCLGNRTHAANILGISIRTLRNKLKEYSDAGVQVPPPQGGVGAAA.

The 113-residue stretch at 2-114 (RLLVVGKLNG…LIAAVLAAVT (113 aa)) folds into the Response regulatory domain. The region spanning 120–349 (MVVRDPAMEQ…LENAMHRAVL (230 aa)) is the Sigma-54 factor interaction domain. ATP-binding positions include 148–155 (GESGSGKE) and 211–220 (ADGGTLLLDE). A DNA-binding region (H-T-H motif) is located at residues 416–435 (RTHAANILGISIRTLRNKLK).

Its subcellular location is the cytoplasm. Functionally, activation of sigma-54-dependent flagellar gene promoters and strong negative autoregulatory effects on its own promoter. The synthesis and function of FlbD in C.crescentus is controlled by an internal cell-cycle clock. This Caulobacter vibrioides (strain ATCC 19089 / CIP 103742 / CB 15) (Caulobacter crescentus) protein is Transcriptional regulatory protein FlbD (flbD).